The primary structure comprises 251 residues: Hydroxyacylglutathione hydrolase (251 aa).

Residues His-53, His-55, Asp-57, His-58, His-110, Asp-127, and His-165 each contribute to the Zn(2+) site.

This sequence belongs to the metallo-beta-lactamase superfamily. Glyoxalase II family. Monomer. Requires Zn(2+) as cofactor.

The catalysed reaction is an S-(2-hydroxyacyl)glutathione + H2O = a 2-hydroxy carboxylate + glutathione + H(+). The protein operates within secondary metabolite metabolism; methylglyoxal degradation; (R)-lactate from methylglyoxal: step 2/2. Functionally, thiolesterase that catalyzes the hydrolysis of S-D-lactoyl-glutathione to form glutathione and D-lactic acid. This chain is Hydroxyacylglutathione hydrolase, found in Escherichia coli O9:H4 (strain HS).